Here is a 296-residue protein sequence, read N- to C-terminus: Probable xyloglucan endotransglucosylase/hydrolase 1 (296 aa).

The first 22 residues, 1–22 (MGIIKGVLFSIVLINLSLVVFC), serve as a signal peptide directing secretion. Positions 23–221 (GYPRRPVDVP…WANAPFTASY (199 aa)) constitute a GH16 domain. Glutamate 107 functions as the Nucleophile in the catalytic mechanism. Glutamate 111 functions as the Proton donor in the catalytic mechanism. Glutamate 111 is a xyloglucan binding site. The N-linked (GlcNAc...) asparagine glycan is linked to asparagine 115. Xyloglucan is bound by residues 124 to 126 (QTN), 134 to 136 (NRE), 200 to 201 (DW), and glycine 205. Cystine bridges form between cysteine 229/cysteine 240 and cysteine 277/cysteine 290. A xyloglucan-binding site is contributed by arginine 282.

The protein belongs to the glycosyl hydrolase 16 family. XTH group 1 subfamily. In terms of processing, contains at least one intrachain disulfide bond essential for its enzymatic activity.

The protein localises to the secreted. Its subcellular location is the cell wall. It localises to the extracellular space. It is found in the apoplast. It carries out the reaction breaks a beta-(1-&gt;4) bond in the backbone of a xyloglucan and transfers the xyloglucanyl segment on to O-4 of the non-reducing terminal glucose residue of an acceptor, which can be a xyloglucan or an oligosaccharide of xyloglucan.. Functionally, catalyzes xyloglucan endohydrolysis (XEH) and/or endotransglycosylation (XET). Cleaves and religates xyloglucan polymers, an essential constituent of the primary cell wall, and thereby participates in cell wall construction of growing tissues. This is Probable xyloglucan endotransglucosylase/hydrolase 1 (XTH1) from Solanum lycopersicum (Tomato).